Consider the following 263-residue polypeptide: Isoprenyl transferase (263 aa).

D38 is an active-site residue. D38 contacts Mg(2+). Residues G39–R42, H55, and S83–D85 contribute to the substrate site. Residue N86 is the Proton acceptor of the active site. Residues F87, R89, R212, and R218–S220 each bind substrate. E231 lines the Mg(2+) pocket.

This sequence belongs to the UPP synthase family. Homodimer. Mg(2+) serves as cofactor.

Functionally, catalyzes the condensation of isopentenyl diphosphate (IPP) with allylic pyrophosphates generating different type of terpenoids. The polypeptide is Isoprenyl transferase (Thermus thermophilus (strain ATCC 27634 / DSM 579 / HB8)).